We begin with the raw amino-acid sequence, 238 residues long: uncharacterized protein (238 aa).

Residues 1-10 (MARGQNIRKR) are compositionally biased toward basic residues. Disordered regions lie at residues 1–26 (MARG…IGIH) and 195–238 (LNTS…YDSF).

This sequence belongs to the asfivirus DP238L family.

This is an uncharacterized protein from Ornithodoros (relapsing fever ticks).